The primary structure comprises 371 residues: o-succinylbenzoate synthase (371 aa).

Lysine 164 serves as the catalytic Proton donor. The Mg(2+) site is built by aspartate 189, glutamate 214, and aspartate 239. The Proton acceptor role is filled by lysine 263.

Belongs to the mandelate racemase/muconate lactonizing enzyme family. MenC type 2 subfamily. Requires a divalent metal cation as cofactor.

The catalysed reaction is (1R,6R)-6-hydroxy-2-succinyl-cyclohexa-2,4-diene-1-carboxylate = 2-succinylbenzoate + H2O. It functions in the pathway quinol/quinone metabolism; 1,4-dihydroxy-2-naphthoate biosynthesis; 1,4-dihydroxy-2-naphthoate from chorismate: step 4/7. It participates in quinol/quinone metabolism; menaquinone biosynthesis. In terms of biological role, converts 2-succinyl-6-hydroxy-2,4-cyclohexadiene-1-carboxylate (SHCHC) to 2-succinylbenzoate (OSB). Does not show detectable N-acylamino acid racemase (NAAAR) activity with N-acetyl-S-methionine as substrate. The protein is o-succinylbenzoate synthase of Bacillus subtilis (strain 168).